Consider the following 343-residue polypeptide: Ribosomal RNA small subunit methyltransferase C (343 aa).

The protein belongs to the methyltransferase superfamily. RsmC family. In terms of assembly, monomer.

The protein localises to the cytoplasm. The enzyme catalyses guanosine(1207) in 16S rRNA + S-adenosyl-L-methionine = N(2)-methylguanosine(1207) in 16S rRNA + S-adenosyl-L-homocysteine + H(+). Its function is as follows. Specifically methylates the guanine in position 1207 of 16S rRNA in the 30S particle. This Escherichia coli O8 (strain IAI1) protein is Ribosomal RNA small subunit methyltransferase C.